Here is a 403-residue protein sequence, read N- to C-terminus: Keratin, type I cytoskeletal 19 (403 aa).

A head region spans residues 1-82 (MTSYSYRQTS…AVSDGLLSGN (82 aa)). An Omega-N-methylarginine modification is found at Arg-7. Phosphoserine occurs at positions 14 and 22. Arg-24 carries the asymmetric dimethylarginine; alternate modification. Arg-24 is modified (omega-N-methylarginine; alternate). Position 27 is a phosphoserine (Ser-27). At Arg-32 the chain carries Omega-N-methylarginine. A phosphoserine mark is found at Ser-35 and Ser-40. Arg-43 and Arg-51 each carry omega-N-methylarginine. Position 57 is a phosphoserine (Ser-57). Arg-64 carries the omega-N-methylarginine modification. Phosphoserine is present on residues Ser-67 and Ser-75. Residues 83-118 (EKITMQNLNDRLASYLDKVRALEQANGELEVKIRDW) form a coil 1A region. Residues 83–394 (EKITMQNLND…SLLEGQEAHY (312 aa)) enclose the IF rod domain. Residues 119–136 (YQKQGPGPSRDYNHYFKT) form a linker 1 region. A coil 1B region spans residues 137–228 (IEDLRDKILG…KNHEEEITAL (92 aa)). A linker 12 region spans residues 229–251 (RSQVGGQVSVEVDSTPGVDLAKI). The tract at residues 247-393 (DLAKILSEMR…RSLLEGQEAH (147 aa)) is necessary for interaction with PNN. Positions 252 to 390 (LSEMRSQYEI…ATYRSLLEGQ (139 aa)) are coil 2. At Thr-326 the chain carries Phosphothreonine. Residues 391–403 (EAHYNNLPTPKAI) are rod-like helical tail. The residue at position 394 (Tyr-394) is a Phosphotyrosine.

This sequence belongs to the intermediate filament family. In terms of assembly, heterotetramer of two type I and two type II keratins. Interacts with PNN and the actin-binding domain of DMD.

Its function is as follows. Involved in the organization of myofibers. Together with KRT8, helps to link the contractile apparatus to dystrophin at the costameres of striated muscle. This Mus musculus (Mouse) protein is Keratin, type I cytoskeletal 19 (Krt19).